A 452-amino-acid polypeptide reads, in one-letter code: Transcription factor AP-2-delta (452 aa).

Ser-239 is subject to Phosphoserine; by PKA. The segment at 280–410 is H-S-H (helix-span-helix), dimerization; sequence RRKAANVTLL…VLSEMLNYLE (131 aa). The interval 416 to 452 is disordered; that stretch reads KNGGAADSGQGHANSEKAPLRKASEAAVKEGKTEKTD. Over residues 429–452 the composition is skewed to basic and acidic residues; the sequence is NSEKAPLRKASEAAVKEGKTEKTD.

The protein belongs to the AP-2 family. Binds DNA as a dimer. Can form homodimers or heterodimers with other AP-2 family members. As to expression, expressed in both embryonic and newborn brain.

It is found in the nucleus. Sequence-specific DNA-binding protein that interacts with inducible viral and cellular enhancer elements to regulate transcription of selected genes. AP-2 factors bind to the consensus sequence 5'-GCCNNNGGC-3' and activate genes involved in a large spectrum of important biological functions including proper eye, face, body wall, limb and neural tube development. They also suppress a number of genes including MCAM/MUC18, C/EBP alpha and MYC. The sequence is that of Transcription factor AP-2-delta (Tfap2d) from Mus musculus (Mouse).